We begin with the raw amino-acid sequence, 159 residues long: Vesicle transport protein SFT2A (159 aa).

At 1-36 the chain is on the cytoplasmic side; it reads MEKLRRVLSGQDDEEQGLTAQVLDASSLSFNTRLKW. At serine 9 the chain carries Phosphoserine. Residues 37–57 traverse the membrane as a helical segment; sequence FVICFVAGIFFSFLGTGLLWL. Topologically, residues 58 to 62 are lumenal; the sequence is PNGMK. The helical transmembrane segment at 63-83 threads the bilayer; it reads LFAVFYTLGNLAALASTCFLM. Over 84-97 the chain is Cytoplasmic; that stretch reads GPVKQLKKMFETTR. The helical transmembrane segment at 98 to 118 threads the bilayer; sequence LLATIIMLLCLVFTLCAALWW. The Lumenal segment spans residues 119–122; sequence RKKG. Residues 123–143 form a helical membrane-spanning segment; it reads LALLFCILQFLSMTWYSLSYI. The Cytoplasmic segment spans residues 144–159; that stretch reads PYARDAVLKCCSSLLG.

It belongs to the SFT2 family.

It localises to the membrane. Functionally, may be involved in fusion of retrograde transport vesicles derived from an endocytic compartment with the Golgi complex. The protein is Vesicle transport protein SFT2A of Mus musculus (Mouse).